Consider the following 366-residue polypeptide: Inactive protein RESTRICTED TEV MOVEMENT 2 (366 aa).

The sHSP domain occupies 14–121 (VQYEDFVPKS…LPETSRTEAA (108 aa)). One copy of the A-1 repeat lies at 129-133 (LEEKR). Residues 129–220 (LEEKRLLEES…LEERRLEERK (92 aa)) are 6 X 5 AA repeats A of L-E-E-[SKR]-[ERK]. Residues 135-139 (LEESR) form an A-2 repeat. One copy of the A-3 repeat lies at 156–160 (LEEKE). The B-1 repeat unit spans residues 163–176 (IRKLQEEAKAKEEA). The segment at 163 to 206 (IRKLQEEAKAKEEAEMRKLQEEAKANEEAAAKKLQEEIEAKEKL) is 3 X 14 AA repeats B of [IMA]-[RK]-K-L-Q-E-E-A-K-A-K-E-[EK]-[LA]. The B-2 repeat unit spans residues 178–191 (MRKLQEEAKANEEA). A B-3 repeat occupies 193-205 (AKKLQEEIEAKEK). Residues 206-210 (LEERK) form an A-4 repeat. An A-5 repeat occupies 211–215 (LEERR). An A-6 repeat occupies 216–220 (LEERK). The chain crosses the membrane as a helical span at residues 322-342 (LMMNVGVAALVIFALGAYVSY). The interval 345-366 (CSSSSSSSSSSPSSSSSSTKPE) is disordered. The span at 346–366 (SSSSSSSSSSPSSSSSSTKPE) shows a compositional bias: low complexity.

The protein belongs to the small heat shock protein (HSP20) family.

Its subcellular location is the cell membrane. Functionally, seems to not be involved in heat resistance. Unable to mediate restriction of long-distance movement of the pathogenic tobacco etch virus (TEV) without causing a hypersensitive response or inducing systemic acquired resistance. This is Inactive protein RESTRICTED TEV MOVEMENT 2 (RTM2) from Arabidopsis thaliana (Mouse-ear cress).